The primary structure comprises 591 residues: Eukaryotic translation initiation factor 3 subunit D (591 aa).

A disordered region spans residues 100 to 159 (SGGNPDEDAAFRLVDGKPPPRPKFGPKWRFNPHHNRNQLPQRRDEEVEAKKRDAEKERAR). A compositionally biased stretch (basic residues) spans 123-135 (FGPKWRFNPHHNR). Positions 140 to 159 (QRRDEEVEAKKRDAEKERAR) are enriched in basic and acidic residues. The interval 309 to 323 (QLDLLSVHETSQEPL) is RNA gate. The segment covering 549–560 (DYVEEPLPEDEQ) has biased composition (acidic residues). The tract at residues 549-591 (DYVEEPLPEDEQVQPTEENTEGAEASVAATKETEEKKADDAQA) is disordered. Basic and acidic residues predominate over residues 579-591 (KETEEKKADDAQA).

Belongs to the eIF-3 subunit D family. As to quaternary structure, component of the eukaryotic translation initiation factor 3 (eIF-3) complex, which is composed of at least 13 different subunits.

It is found in the cytoplasm. MRNA cap-binding component of the eukaryotic translation initiation factor 3 (eIF-3) complex, which is involved in protein synthesis of a specialized repertoire of mRNAs and, together with other initiation factors, stimulates binding of mRNA and methionyl-tRNAi to the 40S ribosome. The eIF-3 complex specifically targets and initiates translation of a subset of mRNAs involved in cell proliferation. In the eIF-3 complex, eif3d specifically recognizes and binds the 7-methylguanosine cap of a subset of mRNAs. This chain is Eukaryotic translation initiation factor 3 subunit D (TIF3D1), found in Arabidopsis thaliana (Mouse-ear cress).